Consider the following 1040-residue polypeptide: Neprilysin-4 (1040 aa).

A disordered region spans residues 1-27 (MSRHSQLKLAMPSVHGAPATAPGSPMN). A required for maintaining muscle integrity region spans residues 1 to 45 (MSRHSQLKLAMPSVHGAPATAPGSPMNAKARSVKLGLGVNQRTGR). Topologically, residues 1–55 (MSRHSQLKLAMPSVHGAPATAPGSPMNAKARSVKLGLGVNQRTGRVQWCPGLTCC) are cytoplasmic. The chain crosses the membrane as a helical; Signal-anchor for type II membrane protein span at residues 56–76 (KMLLLLPVVMLPLTLVLILIM). Residues 77-1040 (RLDGMLAALQ…MNPQKKCSVW (964 aa)) are Extracellular-facing. Residues 251–1040 (EEGTREGIRM…MNPQKKCSVW (790 aa)) form the Peptidase M13 domain. Cystine bridges form between cysteine 277-cysteine 1025, cysteine 285-cysteine 985, cysteine 452-cysteine 700, and cysteine 909-cysteine 1037. N-linked (GlcNAc...) asparagine glycans are attached at residues asparagine 387, asparagine 593, asparagine 723, and asparagine 819. Position 872 (histidine 872) interacts with Zn(2+). Glutamate 873 is a catalytic residue. Residue histidine 876 coordinates Zn(2+). A glycan (N-linked (GlcNAc...) asparagine) is linked at asparagine 916. Position 934 (glutamate 934) interacts with Zn(2+). The active-site Proton donor is the aspartate 938. A glycan (N-linked (GlcNAc...) asparagine) is linked at asparagine 969.

This sequence belongs to the peptidase M13 family. Interacts (via intracellular domain) with the putative carbohydrate kinase CG3534. Requires Zn(2+) as cofactor. As to expression, expressed in the gonads and testes of adults, and the adult and larval brain (at protein level). In embryos, expressed in the pericardial, muscle founder and glia cells (at protein level). In stage 12 embryos, expressed in specific dorsal muscle founder cells such as DA1 and DO2, and also in the certain pericardial progenitor cells where expression persists throughout embryogenesis. Expressed in the glia cells of the embryonic, larval and adult central nervous system. Expressed in the somatic muscles of larvae, pupae and adults. Isoform A: Detected in the male abdomen (at protein level). Isoform B: Not detected in the male or female abdomen (at protein level).

It is found in the cell membrane. The protein localises to the sarcoplasmic reticulum. It localises to the cytoplasm. It catalyses the reaction Preferential cleavage of polypeptides between hydrophobic residues, particularly with Phe or Tyr at P1'.. Functionally, metalloendoprotease which cleaves peptides at the amino side of hydrophobic residues - such as the hormones Akh and Dh31, and the neuropeptides Allatostatins (AST1, AST2, AST3 and AST4), Crz, Drosulfakinins (DSK-I and DSK-II), Lk, sNPF and the tachykinin peptides TK-1, TK-2, TK-4 and TK-5. Functions in female fertility, memory formation and may also act in regulating insulin signaling and food intake. Likely to be involved in controlling feeding behavior and the expression of insulin-like peptides by cleaving various regulatory peptides that include certain Drosulfakinins, Allatostatins and tachykinin peptides. Required in females for normal patterns of egg laying and hatching. Required in the dorsal paired medial neurons for the proper formation of long-term (LTM) and middle-term memories (MTM). Also required in the mushroom body neurons where it functions redundantly with neprilysins Nep2 and Nep3, in normal LTM formation. In terms of biological role, cleaves angiotensin-1 and tachykinin neuropeptide substance P. Functions in maintaining muscle integrity, possibly independently of its endopeptidase activity. This Drosophila melanogaster (Fruit fly) protein is Neprilysin-4.